A 1391-amino-acid polypeptide reads, in one-letter code: DNA-directed RNA polymerase subunit beta' (1391 aa).

Zn(2+)-binding residues include Cys-72, Cys-74, Cys-87, and Cys-90. Residues Asp-462, Asp-464, and Asp-466 each coordinate Mg(2+). Residues Cys-816, Cys-890, Cys-897, and Cys-900 each coordinate Zn(2+).

This sequence belongs to the RNA polymerase beta' chain family. The RNAP catalytic core consists of 2 alpha, 1 beta, 1 beta' and 1 omega subunit. When a sigma factor is associated with the core the holoenzyme is formed, which can initiate transcription. Mg(2+) is required as a cofactor. Requires Zn(2+) as cofactor.

It carries out the reaction RNA(n) + a ribonucleoside 5'-triphosphate = RNA(n+1) + diphosphate. DNA-dependent RNA polymerase catalyzes the transcription of DNA into RNA using the four ribonucleoside triphosphates as substrates. In Neisseria meningitidis serogroup B (strain ATCC BAA-335 / MC58), this protein is DNA-directed RNA polymerase subunit beta'.